A 160-amino-acid chain; its full sequence is Type IV major fimbrial protein FimA (160 aa).

A propeptide spans 1–7 (leader sequence); that stretch reads MKSLQKG. Residue Phe8 is modified to N-methylphenylalanine. Residues 8-28 form a helical membrane-spanning segment; sequence FTLIELMIVVAIIGILAAFAI. Cys63 and Cys105 are disulfide-bonded.

Belongs to the N-Me-Phe pilin family. The pili are polar flexible filaments of about 5.4 nanometers diameter and 2.5 micrometers average length; they consist of only a single polypeptide chain arranged in a helical configuration of five subunits per turn in the assembled pilus.

It is found in the fimbrium. It localises to the membrane. Its function is as follows. Major component of the type IV fimbriae that plays an essential role in twitching motility, natural transformation, and protease secretion. In Dichelobacter nodosus (Bacteroides nodosus), this protein is Type IV major fimbrial protein FimA (fimA).